The sequence spans 278 residues: TATA box-binding protein-associated factor RNA polymerase I subunit D (278 aa).

2 disordered regions span residues 19–71 (LANR…SSFE) and 88–115 (KKRY…RRNP). Ser-23 carries the post-translational modification Phosphoserine. 2 stretches are compositionally biased toward basic residues: residues 43-53 (REKRNPIRKFV) and 88-99 (KKRYKKKKKKRY). Phosphoserine is present on residues Ser-138 and Ser-234.

As to quaternary structure, component of the transcription factor SL1/TIF-IB complex, composed of TBP and at least TAF1A, TAF1B, TAF1C and TAF1D. Interacts with UBTF.

The protein localises to the nucleus. In terms of biological role, component of the transcription factor SL1/TIF-IB complex, which is involved in the assembly of the PIC (preinitiation complex) during RNA polymerase I-dependent transcription. The rate of PIC formation probably is primarily dependent on the rate of association of SL1/TIF-IB with the rDNA promoter. SL1/TIF-IB is involved in stabilization of nucleolar transcription factor 1/UBTF on rDNA. Formation of SL1/TIF-IB excludes the association of TBP with TFIID subunits. The sequence is that of TATA box-binding protein-associated factor RNA polymerase I subunit D (TAF1D) from Pongo abelii (Sumatran orangutan).